Here is a 154-residue protein sequence, read N- to C-terminus: SsrA-binding protein (154 aa).

This sequence belongs to the SmpB family.

It localises to the cytoplasm. Functionally, required for rescue of stalled ribosomes mediated by trans-translation. Binds to transfer-messenger RNA (tmRNA), required for stable association of tmRNA with ribosomes. tmRNA and SmpB together mimic tRNA shape, replacing the anticodon stem-loop with SmpB. tmRNA is encoded by the ssrA gene; the 2 termini fold to resemble tRNA(Ala) and it encodes a 'tag peptide', a short internal open reading frame. During trans-translation Ala-aminoacylated tmRNA acts like a tRNA, entering the A-site of stalled ribosomes, displacing the stalled mRNA. The ribosome then switches to translate the ORF on the tmRNA; the nascent peptide is terminated with the 'tag peptide' encoded by the tmRNA and targeted for degradation. The ribosome is freed to recommence translation, which seems to be the essential function of trans-translation. In Methylobacillus flagellatus (strain ATCC 51484 / DSM 6875 / VKM B-1610 / KT), this protein is SsrA-binding protein.